The primary structure comprises 324 residues: Kelch domain-containing protein AF_2170 (324 aa).

2 Kelch repeats span residues 229–276 and 277–323; these read YIFA…VGGE and YIYI…NNGK.

In Archaeoglobus fulgidus (strain ATCC 49558 / DSM 4304 / JCM 9628 / NBRC 100126 / VC-16), this protein is Kelch domain-containing protein AF_2170.